We begin with the raw amino-acid sequence, 237 residues long: Chalcone--flavanone isomerase (237 aa).

2 residues coordinate substrate: Thr50 and Ser192.

It belongs to the chalcone isomerase family.

The enzyme catalyses a chalcone = a flavanone.. It participates in secondary metabolite biosynthesis; flavonoid biosynthesis. Its function is as follows. Catalyzes the intramolecular cyclization of bicyclic chalcones into tricyclic (S)-flavanones. Responsible for the isomerization of 4,2',4',6'-tetrahydroxychalcone (also termed chalcone) into naringenin. This Callistephus chinensis (China aster) protein is Chalcone--flavanone isomerase (CHI).